Reading from the N-terminus, the 406-residue chain is Leucine aminopeptidase 1 (406 aa).

Positions 1-18 are cleaved as a signal peptide; the sequence is MKVTNASLLALLLPAVSG. Positions 19-94 are excised as a propeptide; sequence RFVETGEPDR…LRAMTASRKK (76 aa). A glycan (N-linked (GlcNAc...) asparagine) is linked at Asn186. His194, Asp213, Glu252, and Asp279 together coordinate Zn(2+). The N-linked (GlcNAc...) asparagine glycan is linked to Asn306. A disulfide bond links Cys328 and Cys332. Residue His361 coordinates Zn(2+).

This sequence belongs to the peptidase M28 family. M28E subfamily. As to quaternary structure, monomer. Zn(2+) is required as a cofactor.

The protein resides in the secreted. In terms of biological role, extracellular aminopeptidase that allows assimilation of proteinaceous substrates. In Chaetomium globosum (strain ATCC 6205 / CBS 148.51 / DSM 1962 / NBRC 6347 / NRRL 1970) (Soil fungus), this protein is Leucine aminopeptidase 1 (LAP1).